A 257-amino-acid chain; its full sequence is Uroplakin-1a (257 aa).

The Cytoplasmic portion of the chain corresponds to 1–13; the sequence is MASAATEGEKGSP. Residues 14–34 traverse the membrane as a helical segment; it reads VVVGLLVVGNIIILLSGLALF. The Extracellular segment spans residues 35–58; it reads AETVWVTADQYRVYPLMGVSGKDD. Residues 59–85 form a helical membrane-spanning segment; that stretch reads VFAGAWIAIFCGFSFFVVASFGVGAAL. The Cytoplasmic segment spans residues 86-90; sequence CRRRY. A helical transmembrane segment spans residues 91-111; that stretch reads MILTYLLLMLIVYIFECASCI. Topologically, residues 112 to 229 are extracellular; the sequence is TSYTHRDYMV…HIGHAIDSYT (118 aa). Asparagine 169 carries an N-linked (GlcNAc...) asparagine glycan. Residues 230–251 traverse the membrane as a helical segment; it reads WGISWFGFAILMWTLPVMLIAM. Residues 252–257 lie on the Cytoplasmic side of the membrane; sequence YFYTTL.

The protein belongs to the tetraspanin (TM4SF) family. Homodimer; disulfide-linked. Interacts with uroplakin-2 (UPK2). Binds to uropathogenic E.coli fimH.

The protein resides in the membrane. In terms of biological role, component of the asymmetric unit membrane (AUM); a highly specialized biomembrane elaborated by terminally differentiated urothelial cells. May play an important role in normal bladder epithelial physiology, possibly in regulating membrane permeability of superficial umbrella cells or in stabilizing the apical membrane through AUM/cytoskeletal interactions. The polypeptide is Uroplakin-1a (Upk1a) (Mus musculus (Mouse)).